Consider the following 435-residue polypeptide: Tubulin-like protein TubZ (435 aa).

Residues 25–26 (MG), 124–126 (GTG), Asn185, and Asn209 each bind GTP. Residues 403 to 435 (QEEKPKKKKLNFGAEPEAEVADDSQPTKKKLSF) form a disordered region.

This sequence belongs to the FtsZ family. TubZ subfamily. As to quaternary structure, polymerizes to form two-stranded filaments and bundles at higher concentration in the presence of GTP. Binds to the TubR-tubC protein DNA complex.

The protein resides in the cytoplasm. It carries out the reaction GTP + H2O = GDP + phosphate + H(+). Its activity is regulated as follows. GTPase inhibited by GTP-gamma-S, which also stabilizes filaments. Functionally, a tubulin-like, filament forming GTPase; the motor component of the type III plasmid partition system which ensures correct segregation of the pXO1 plasmid. Essential for plasmid replication. The filaments seed from a DNA centromere-like site (tubC)-TubR complex which extends to surround the TubZ filaments. Highly dynamic filaments grow at the plus end and depolymerize at the minus end, a process called treadmilling. TubR-tubC complexes track the depolymerizing minus end of the filament, probably pulling plasmid within the cell. Has a high GTPase activity; in the presence of GTP assembles into dynamic filaments which bind almost exclusively GDP. Filament formation is cooperative, requiring a critical concentration. Formation occurs very quickly and is followed by disassembly as GTP is consumed. Small amounts of GTP-gamma-S stabilize filaments. Has high GTP and dGTPase activity, 6-fold lower ATPase activity. Forms filaments in the presence of ATP that also disassemble. Weakly binds DNA in a GTP-dependent, non-sequence-specific manner; GTP hydrolysis is not required for DNA-binding. The sequence is that of Tubulin-like protein TubZ from Bacillus anthracis.